Consider the following 500-residue polypeptide: Probable malate:quinone oxidoreductase (500 aa).

Belongs to the MQO family. FAD is required as a cofactor.

The catalysed reaction is (S)-malate + a quinone = a quinol + oxaloacetate. It participates in carbohydrate metabolism; tricarboxylic acid cycle; oxaloacetate from (S)-malate (quinone route): step 1/1. The protein is Probable malate:quinone oxidoreductase of Corynebacterium glutamicum (strain R).